Consider the following 80-residue polypeptide: Exodeoxyribonuclease 7 small subunit (80 aa).

The protein belongs to the XseB family. Heterooligomer composed of large and small subunits.

The protein localises to the cytoplasm. It carries out the reaction Exonucleolytic cleavage in either 5'- to 3'- or 3'- to 5'-direction to yield nucleoside 5'-phosphates.. Bidirectionally degrades single-stranded DNA into large acid-insoluble oligonucleotides, which are then degraded further into small acid-soluble oligonucleotides. The sequence is that of Exodeoxyribonuclease 7 small subunit from Pseudomonas putida (strain W619).